The sequence spans 110 residues: UPF0235 protein Mpop_2087 (110 aa).

This sequence belongs to the UPF0235 family.

The chain is UPF0235 protein Mpop_2087 from Methylorubrum populi (strain ATCC BAA-705 / NCIMB 13946 / BJ001) (Methylobacterium populi).